The chain runs to 79 residues: Acyl carrier protein (79 aa).

The Carrier domain occupies 2-77 (SEIGERVKKI…DATKFLEKNA (76 aa)). Ser-37 is modified (O-(pantetheine 4'-phosphoryl)serine).

This sequence belongs to the acyl carrier protein (ACP) family. 4'-phosphopantetheine is transferred from CoA to a specific serine of apo-ACP by AcpS. This modification is essential for activity because fatty acids are bound in thioester linkage to the sulfhydryl of the prosthetic group.

It localises to the cytoplasm. It participates in lipid metabolism; fatty acid biosynthesis. Carrier of the growing fatty acid chain in fatty acid biosynthesis. This Nitrobacter hamburgensis (strain DSM 10229 / NCIMB 13809 / X14) protein is Acyl carrier protein.